Consider the following 73-residue polypeptide: Mu-conotoxin PIIIA (73 aa).

The first 19 residues, 1 to 19 (MSKLGVLLTICLLLFPITA), serve as a signal peptide directing secretion. The propeptide occupies 20–49 (LPMDGDQPADRLAERMQDNISSEEHPFEKR). At Q50 the chain carries Pyrrolidone carboxylic acid. Intrachain disulfides connect C53–C65, C53–C70, C54–C70, C54–C71, C60–C65, and C60–C71. At P57 the chain carries 4-hydroxyproline. At P67 the chain carries 4-hydroxyproline. C71 carries the post-translational modification Cysteine amide.

The protein belongs to the conotoxin M superfamily. 3D-structure of 3 disulfide-bond connectivities isomers is described (PIIIA-1 (C1-C5, C2-C6, C3-C4), PIIIA-2 (C1-C4, C2-C5, C3-C6) and PIIIA-3 (C1-C2, C3-C4, C5-C6)). Only PIIIA-2 contains the cysteine connectivity described as typical for native mu-conotoxins. However, PIIIA-1 is more potent than PIIIA-2, suggesting another possible disulfid connectivity. For this reason, both connectivities have been indicated in features. As to expression, expressed by the venom duct.

It localises to the secreted. Its function is as follows. Mu-conotoxins block voltage-gated sodium channels (Nav). This toxin potently blocks rNav1.4/SCN4A (IC(50)=36-41 nM). It also moderately blocks rNav1.1/SCN1A (IC(50)=120 nM), rNav1.2/SCN2A (IC(50)=620 nM), rNav1.3/SCN3A (IC(50)=3.2 uM), mNav1.6/SCN8A (IC(50)=100 nM). This inhibition is reversible. The block of Nav1.1, Nav1.2, and Nav1.6 is modified when beta-subunits are coexpressed with alpha subunits. Hence, blocks of channels containing the beta-1 and beta-3 subunits are more potent (compared to channels without beta subunits), whereas blocks of channels containing the beta-2 and beta-4 are less potent (compared to channels without beta subunits). In vivo, this peptide causes flaccid paralysis in both mice and fish. The protein is Mu-conotoxin PIIIA of Conus purpurascens (Purple cone).